Consider the following 164-residue polypeptide: R-phycoerythrin alpha chain (164 aa).

(2R,3E)-phycoerythrobilin is bound by residues cysteine 82 and cysteine 139.

This sequence belongs to the phycobiliprotein family. As to quaternary structure, heterodimer of an alpha and a beta chain. Contains two covalently linked bilin chromophores.

It is found in the plastid. The protein localises to the chloroplast thylakoid membrane. Functionally, light-harvesting photosynthetic bile pigment-protein from the phycobiliprotein complex. The chain is R-phycoerythrin alpha chain (cpeA) from Lophosiphonia boldii (Red alga).